The chain runs to 150 residues: Deoxyuridine 5'-triphosphate nucleotidohydrolase (150 aa).

Substrate-binding positions include 69 to 71, Asn-82, 86 to 88, and Lys-96; these read RSG and LID.

Belongs to the dUTPase family. Requires Mg(2+) as cofactor.

It catalyses the reaction dUTP + H2O = dUMP + diphosphate + H(+). It participates in pyrimidine metabolism; dUMP biosynthesis; dUMP from dCTP (dUTP route): step 2/2. Its function is as follows. This enzyme is involved in nucleotide metabolism: it produces dUMP, the immediate precursor of thymidine nucleotides and it decreases the intracellular concentration of dUTP so that uracil cannot be incorporated into DNA. The sequence is that of Deoxyuridine 5'-triphosphate nucleotidohydrolase from Neisseria meningitidis serogroup B (strain ATCC BAA-335 / MC58).